A 637-amino-acid chain; its full sequence is Serine/threonine-protein kinase Nek11 (637 aa).

The 259-residue stretch at 29 to 287 (YVLQQKLGSG…AIEILKIPYI (259 aa)) folds into the Protein kinase domain. Residues 35–43 (LGSGSFGTV) and Lys-61 contribute to the ATP site. Asp-158 serves as the catalytic Proton acceptor. Residue Ser-273 is modified to Phosphoserine; by CHEK1. Residues 302 to 385 (TLEDKNLDCQ…QELRSRNFQQ (84 aa)) adopt a coiled-coil conformation. Residues 399–446 (GMEEKEEQPEGRPSCSPQDEDEERWQDREEEFDEPTLENLSEPQPIPS) are disordered. Residues 416-434 (QDEDEERWQDREEEFDEPT) show a composition bias toward acidic residues.

It belongs to the protein kinase superfamily. NEK Ser/Thr protein kinase family. NIMA subfamily. Interacts with NEK2. Requires Mn(2+) as cofactor. Mg(2+) serves as cofactor. Phosphorylated by NEK2. Phosphorylation at Ser-273 is important for its activation.

The protein localises to the nucleus. It is found in the nucleolus. It carries out the reaction L-seryl-[protein] + ATP = O-phospho-L-seryl-[protein] + ADP + H(+). The catalysed reaction is L-threonyl-[protein] + ATP = O-phospho-L-threonyl-[protein] + ADP + H(+). Its activity is regulated as follows. Autorepressed by intramolecular binding of the C-terminus which dissociates following phosphorylation by NEK2. Activated in response to DNA damage. Inhibited by zinc. In terms of biological role, protein kinase which plays an important role in the G2/M checkpoint response to DNA damage. Controls degradation of CDC25A by directly phosphorylating it on residues whose phosphorylation is required for BTRC-mediated polyubiquitination and degradation. In Macaca fascicularis (Crab-eating macaque), this protein is Serine/threonine-protein kinase Nek11 (NEK11).